Reading from the N-terminus, the 61-residue chain is DNA-binding protein 7a (61 aa).

Positions 37–61 (NGKTGRGAVSEKDAPKELLEKLEKK) are disordered. The segment covering 45-61 (VSEKDAPKELLEKLEKK) has biased composition (basic and acidic residues).

The protein belongs to the 7 kDa DNA-binding/endoribonuclease P2 family. As to quaternary structure, monomer.

The protein resides in the cytoplasm. In terms of biological role, can constrain negative DNA supercoils. May be involved in maintaining the integrity of the genome at high temperature. This chain is DNA-binding protein 7a, found in Acidianus hospitalis (strain W1).